The sequence spans 639 residues: Extracellular metalloproteinase 1 (639 aa).

An N-terminal signal peptide occupies residues 1–19; sequence MHGLLLAAGLISLPLHVLA. Positions 20 to 250 are excised as a propeptide; sequence HPQPSSTSLA…VHNVVDYVAH (231 aa). An N-linked (GlcNAc...) asparagine glycan is attached at Asn-291. His-434 contacts Zn(2+). The active site involves Glu-435. His-438 provides a ligand contact to Zn(2+). Asn-598 carries an N-linked (GlcNAc...) asparagine glycan.

It belongs to the peptidase M36 family. Requires Zn(2+) as cofactor.

The protein resides in the secreted. In terms of biological role, secreted metalloproteinase probably acting as a virulence factor. This chain is Extracellular metalloproteinase 1 (MEP1), found in Arthroderma otae (strain ATCC MYA-4605 / CBS 113480) (Microsporum canis).